The following is a 402-amino-acid chain: NADH dehydrogenase [ubiquinone] 1 alpha subcomplex subunit 9, mitochondrial (402 aa).

The transit peptide at 1-43 directs the protein to the mitochondrion; the sequence is MQVVSRRLVQRPLVGGASIYSSSSLRSLYGVSNHLNGTDNCRY.

It belongs to the complex I NDUFA9 subunit family. In terms of assembly, complex I is composed of at least 49 different subunits. This a component of the hydrophobic protein fraction. FAD is required as a cofactor.

The protein localises to the mitochondrion matrix. In terms of biological role, accessory subunit of the mitochondrial membrane respiratory chain NADH dehydrogenase (Complex I), that is believed not to be involved in catalysis. Complex I functions in the transfer of electrons from NADH to the respiratory chain. The immediate electron acceptor for the enzyme is believed to be ubiquinone. The polypeptide is NADH dehydrogenase [ubiquinone] 1 alpha subcomplex subunit 9, mitochondrial (Arabidopsis thaliana (Mouse-ear cress)).